A 547-amino-acid chain; its full sequence is Chorismate synthase (547 aa).

Catalysis depends on residues His-17, His-104, and Asp-500.

Belongs to the chorismate synthase family.

The protein resides in the cytoplasm. It localises to the cytosol. It catalyses the reaction 5-O-(1-carboxyvinyl)-3-phosphoshikimate = chorismate + phosphate. The enzyme catalyses FMNH2 + NADP(+) = FMN + NADPH + 2 H(+). Its pathway is metabolic intermediate biosynthesis; chorismate biosynthesis; chorismate from D-erythrose 4-phosphate and phosphoenolpyruvate: step 7/7. Bifunctional chorismate synthase and flavin reductase. Catalyzes the conversion of 5-enolpyruvylshikimate 3-phosphate (EPSP) to form chorismate. Acts also as a flavin reductase (FR) able to generate reduced flavin mononucleotide in the presence of NADPH. The chain is Chorismate synthase from Plasmodium vivax (strain Salvador I).